A 213-amino-acid chain; its full sequence is V-type ATP synthase subunit D (213 aa).

The protein belongs to the V-ATPase D subunit family.

In terms of biological role, produces ATP from ADP in the presence of a proton gradient across the membrane. This Clostridium botulinum (strain Alaska E43 / Type E3) protein is V-type ATP synthase subunit D.